The following is a 215-amino-acid chain: Putative glycosyltransferase ALG1L2 (215 aa).

The tract at residues 40-66 is disordered; that stretch reads PFRARSEPEDPDTERSAFTERDSGSGL. Residues 43-62 are compositionally biased toward basic and acidic residues; it reads ARSEPEDPDTERSAFTERDS.

This sequence belongs to the glycosyltransferase group 1 family.

In terms of biological role, putative glycosyltransferase. This is Putative glycosyltransferase ALG1L2 (ALG1L2) from Homo sapiens (Human).